The sequence spans 285 residues: 4-hydroxybenzoate octaprenyltransferase (285 aa).

8 helical membrane-spanning segments follow: residues 28-48 (LWAM…WIFV), 86-106 (IAAW…FALV), 110-130 (NALT…YPFF), 133-153 (FFAI…PMAF), 165-185 (WLML…YAMV), 210-230 (IMLC…LLGL), 232-252 (WPYW…YTLI), and 262-284 (AAFR…AYAI).

Belongs to the UbiA prenyltransferase family. It depends on Mg(2+) as a cofactor.

Its subcellular location is the cell inner membrane. It catalyses the reaction all-trans-octaprenyl diphosphate + 4-hydroxybenzoate = 4-hydroxy-3-(all-trans-octaprenyl)benzoate + diphosphate. It functions in the pathway cofactor biosynthesis; ubiquinone biosynthesis. In terms of biological role, catalyzes the prenylation of para-hydroxybenzoate (PHB) with an all-trans polyprenyl group. Mediates the second step in the final reaction sequence of ubiquinone-8 (UQ-8) biosynthesis, which is the condensation of the polyisoprenoid side chain with PHB, generating the first membrane-bound Q intermediate 3-octaprenyl-4-hydroxybenzoate. The polypeptide is 4-hydroxybenzoate octaprenyltransferase (Cupriavidus necator (strain ATCC 17699 / DSM 428 / KCTC 22496 / NCIMB 10442 / H16 / Stanier 337) (Ralstonia eutropha)).